We begin with the raw amino-acid sequence, 79 residues long: Bacteriochlorophyll c-binding protein (79 aa).

His25 lines the a bacteriochlorophyll c pocket.

Belongs to the BChl C/E-binding protein family.

The protein resides in the chlorosome. It is found in the chlorosome envelope. Functionally, component of the photosynthetic apparatus. The light harvesting B740 complex binds bacteriochlorophyll c. This chain is Bacteriochlorophyll c-binding protein (csmA), found in Chlorobaculum tepidum (strain ATCC 49652 / DSM 12025 / NBRC 103806 / TLS) (Chlorobium tepidum).